The primary structure comprises 222 residues: Large ribosomal subunit protein uL1 (222 aa).

Belongs to the universal ribosomal protein uL1 family. In terms of assembly, part of the 50S ribosomal subunit.

Binds directly to 23S rRNA. Probably involved in E site tRNA release. Functionally, protein L1 is also a translational repressor protein, it controls the translation of its operon by binding to its mRNA. This Pyrobaculum neutrophilum (strain DSM 2338 / JCM 9278 / NBRC 100436 / V24Sta) (Thermoproteus neutrophilus) protein is Large ribosomal subunit protein uL1.